The following is a 414-amino-acid chain: MQVYAVGGAVRDQLLGKPSQDRDYVVVGATPADMEAAGFKPVGKDFPVFLHPHTKAEYALARTERKTAVGYKGFAFYTGADVTLEEDLVRRDLTINAMAQAVDEHDNLVGPVIDPYGGQKDLAARKFRHVSDAFAEDPVRILRVARFAARFHEFTVAPETVALMRKIVDAGEVDALVPERVWQELSRGLMEAKPSRMFDVLRECGALAHLLPELDRLWGVPQRPEYHPEVDTGVHVMMVIDYAASVGASLPVRFAAMAHDLGKGTTPEDMLPRHIGHEQRGVKLLEAICQRLRVPNDCRELALVVAREHGNIHRSTEFGAAALTRLVERCDALRKPERFAEALLACEADARGRLGFADKDYPQADRLLAARDAAASVDAGAIAKACGDKVDQIKDRVHKARVAAVAQRLGMAEE.

Residues Gly-8 and Arg-11 each contribute to the ATP site. Residues Gly-8 and Arg-11 each contribute to the CTP site. 2 residues coordinate Mg(2+): Asp-21 and Asp-23. Residues Arg-91, Arg-143, and Arg-146 each contribute to the ATP site. Arg-91, Arg-143, and Arg-146 together coordinate CTP. An HD domain is found at 232–333 (TGVHVMMVID…TRLVERCDAL (102 aa)).

Belongs to the tRNA nucleotidyltransferase/poly(A) polymerase family. Bacterial CCA-adding enzyme type 1 subfamily. Monomer. Can also form homodimers and oligomers. Requires Mg(2+) as cofactor. The cofactor is Ni(2+).

The enzyme catalyses a tRNA precursor + 2 CTP + ATP = a tRNA with a 3' CCA end + 3 diphosphate. It catalyses the reaction a tRNA with a 3' CCA end + 2 CTP + ATP = a tRNA with a 3' CCACCA end + 3 diphosphate. Functionally, catalyzes the addition and repair of the essential 3'-terminal CCA sequence in tRNAs without using a nucleic acid template. Adds these three nucleotides in the order of C, C, and A to the tRNA nucleotide-73, using CTP and ATP as substrates and producing inorganic pyrophosphate. tRNA 3'-terminal CCA addition is required both for tRNA processing and repair. Also involved in tRNA surveillance by mediating tandem CCA addition to generate a CCACCA at the 3' terminus of unstable tRNAs. While stable tRNAs receive only 3'-terminal CCA, unstable tRNAs are marked with CCACCA and rapidly degraded. This is Multifunctional CCA protein from Cupriavidus metallidurans (strain ATCC 43123 / DSM 2839 / NBRC 102507 / CH34) (Ralstonia metallidurans).